A 451-amino-acid chain; its full sequence is Uronate isomerase (451 aa).

It belongs to the metallo-dependent hydrolases superfamily. Uronate isomerase family.

It catalyses the reaction D-glucuronate = D-fructuronate. The enzyme catalyses aldehydo-D-galacturonate = keto-D-tagaturonate. The protein operates within carbohydrate metabolism; pentose and glucuronate interconversion. The polypeptide is Uronate isomerase (Thermotoga petrophila (strain ATCC BAA-488 / DSM 13995 / JCM 10881 / RKU-1)).